The sequence spans 199 residues: Probable GTP-binding protein EngB (199 aa).

Residues 28–199 enclose the EngB-type G domain; it reads DLPEIALAGR…DSWDAILEQV (172 aa). GTP is bound by residues 36–43, 63–67, 81–84, 148–151, and 180–182; these read GRSNVGKS, GKTQL, DVPG, TKAD, and FSS. Mg(2+) contacts are provided by serine 43 and threonine 65.

The protein belongs to the TRAFAC class TrmE-Era-EngA-EngB-Septin-like GTPase superfamily. EngB GTPase family. Requires Mg(2+) as cofactor.

Functionally, necessary for normal cell division and for the maintenance of normal septation. This Streptococcus pyogenes serotype M1 protein is Probable GTP-binding protein EngB.